The following is a 458-amino-acid chain: Argininosuccinate lyase (458 aa).

It belongs to the lyase 1 family. Argininosuccinate lyase subfamily.

The protein localises to the cytoplasm. The enzyme catalyses 2-(N(omega)-L-arginino)succinate = fumarate + L-arginine. It participates in amino-acid biosynthesis; L-arginine biosynthesis; L-arginine from L-ornithine and carbamoyl phosphate: step 3/3. This is Argininosuccinate lyase from Pelobacter propionicus (strain DSM 2379 / NBRC 103807 / OttBd1).